We begin with the raw amino-acid sequence, 101 residues long: Integration host factor subunit beta (101 aa).

Positions 57-76 (PARAGRNPRTGEHVPVDQKS) are disordered.

The protein belongs to the bacterial histone-like protein family. Heterodimer of an alpha and a beta chain.

Its function is as follows. This protein is one of the two subunits of integration host factor, a specific DNA-binding protein that functions in genetic recombination as well as in transcriptional and translational control. The polypeptide is Integration host factor subunit beta (Nitrobacter winogradskyi (strain ATCC 25391 / DSM 10237 / CIP 104748 / NCIMB 11846 / Nb-255)).